A 291-amino-acid polypeptide reads, in one-letter code: Pantothenate synthetase 1 (291 aa).

Residue His37 is the Proton donor of the active site. 147-150 (GEKD) is an ATP binding site. Residue Gln153 participates in (R)-pantoate binding. 184 to 187 (ISSR) is a binding site for ATP.

Belongs to the pantothenate synthetase family. In terms of assembly, homodimer.

It localises to the cytoplasm. The enzyme catalyses (R)-pantoate + beta-alanine + ATP = (R)-pantothenate + AMP + diphosphate + H(+). The protein operates within cofactor biosynthesis; (R)-pantothenate biosynthesis; (R)-pantothenate from (R)-pantoate and beta-alanine: step 1/1. Functionally, catalyzes the condensation of pantoate with beta-alanine in an ATP-dependent reaction via a pantoyl-adenylate intermediate. The polypeptide is Pantothenate synthetase 1 (Frankia alni (strain DSM 45986 / CECT 9034 / ACN14a)).